We begin with the raw amino-acid sequence, 345 residues long: Alkaline phosphatase isozyme conversion protein (345 aa).

An N-terminal signal peptide occupies residues 1–24 (MFSALRHRTAALALGVCFILPVHA). 4 residues coordinate Zn(2+): histidine 117, aspartate 143, glutamate 176, and aspartate 204.

The protein belongs to the peptidase M28 family. M28C subfamily.

Its function is as follows. This protein, presumably an aminopeptidase, mediates the conversion of E.coli alkaline phosphatase isozyme 1, to isozymes 2 and 3 by removing, one by one, the two N-terminal arginine residues. This Escherichia coli (strain K12) protein is Alkaline phosphatase isozyme conversion protein (iap).